The following is a 383-amino-acid chain: Adaptive-response sensory kinase SasA (383 aa).

Positions 152–365 (MVAHELRTPL…CFTFTVPIWQ (214 aa)) constitute a Histidine kinase domain. A Phosphohistidine; by autocatalysis modification is found at His155.

Homooligomerizes. Interacts with KaiC. Participates in the KaiABC clock complex, whose core is composed of a KaiC homohexamer, 6 KaiB and up to 6 KaiA dimers. SasA and KaiB(fs) compete to bind to KaiC.

The enzyme catalyses ATP + protein L-histidine = ADP + protein N-phospho-L-histidine.. In terms of biological role, member of the two-component regulatory system SasA/RpaA involved in genome-wide circadian gene expression. One of several clock output pathways. Participates in the Kai clock protein complex, the main circadian regulator in cyanobacteria, via its interaction with KaiC. KaiC enhances the autophosphorylation activity of SasA, which then transfers its phosphate group to RpaA to activate it. In addition to its output function, recruits fold-shifted KaiB (KaiB(fs)) to KaiC to cooperatively form the KaiB(6):KaiC(6) complex (independent of SasA kinase activity). Required for robustness of the circadian rhythm of gene expression and is involved in clock output, also required for adaptation to light/dark cycles. The protein is Adaptive-response sensory kinase SasA of Parasynechococcus marenigrum (strain WH8102).